The chain runs to 525 residues: Zwittermicin A synthase ZmaJ (525 aa).

Belongs to the ATP-dependent AMP-binding enzyme family.

It catalyses the reaction holo-[peptidyl-carrier protein] + L-serine + ATP = L-seryl-[peptidyl-carrier protein] + AMP + diphosphate. It functions in the pathway antibiotic biosynthesis. In terms of biological role, involved in the biosynthesis of the linear aminopolyol antibiotic zwittermicin A (ZmA). Specifically adenylates L-serine and loads it onto the holo form of ZmaH via a thioester linkage to the phosphopanthetheine moiety. This is Zwittermicin A synthase ZmaJ from Bacillus cereus.